We begin with the raw amino-acid sequence, 369 residues long: Histidinol-phosphate aminotransferase (369 aa).

Residue lysine 222 is modified to N6-(pyridoxal phosphate)lysine.

This sequence belongs to the class-II pyridoxal-phosphate-dependent aminotransferase family. Histidinol-phosphate aminotransferase subfamily. As to quaternary structure, homodimer. Pyridoxal 5'-phosphate is required as a cofactor.

It catalyses the reaction L-histidinol phosphate + 2-oxoglutarate = 3-(imidazol-4-yl)-2-oxopropyl phosphate + L-glutamate. It functions in the pathway amino-acid biosynthesis; L-histidine biosynthesis; L-histidine from 5-phospho-alpha-D-ribose 1-diphosphate: step 7/9. This Halalkalibacterium halodurans (strain ATCC BAA-125 / DSM 18197 / FERM 7344 / JCM 9153 / C-125) (Bacillus halodurans) protein is Histidinol-phosphate aminotransferase.